Reading from the N-terminus, the 91-residue chain is MNPFKWLIILPVRFYQLFISPILGPRCRFYPTCSHYTIEAVQQHGVFCGLWLAIKRIAKCHPGNPGGVDPVPSCGCHSDKETTPKEKSDNA.

Residues 66–91 (GGVDPVPSCGCHSDKETTPKEKSDNA) are disordered. Residues 77–91 (HSDKETTPKEKSDNA) are compositionally biased toward basic and acidic residues.

The protein belongs to the UPF0161 family.

Its subcellular location is the cell inner membrane. Functionally, could be involved in insertion of integral membrane proteins into the membrane. This Hydrogenovibrio crunogenus (strain DSM 25203 / XCL-2) (Thiomicrospira crunogena) protein is Putative membrane protein insertion efficiency factor.